A 189-amino-acid chain; its full sequence is MTLQRPWTGVVLAGGRSSRMGQDKALLPWHGRPLLEQMQALLRQAGAQHVVVSGNRPEYAGIADVHPDLGPLGGLASVIANAADATTLVVVPVDMPLLSAALLGKLLAPSQHRCVAFEDQMLPMCLRLDASVREALTVLMAGAASSRSLRALQHSLQCHRVTVTASERAEFVNCNTPEQWSRLIHENPD.

GTP-binding positions include 12-14, K24, D68, and D94; that span reads LAG. D94 serves as a coordination point for Mg(2+).

Belongs to the MobA family. As to quaternary structure, monomer. It depends on Mg(2+) as a cofactor.

The protein resides in the cytoplasm. The enzyme catalyses Mo-molybdopterin + GTP + H(+) = Mo-molybdopterin guanine dinucleotide + diphosphate. Transfers a GMP moiety from GTP to Mo-molybdopterin (Mo-MPT) cofactor (Moco or molybdenum cofactor) to form Mo-molybdopterin guanine dinucleotide (Mo-MGD) cofactor. In Xanthomonas euvesicatoria pv. vesicatoria (strain 85-10) (Xanthomonas campestris pv. vesicatoria), this protein is Molybdenum cofactor guanylyltransferase.